We begin with the raw amino-acid sequence, 198 residues long: Zinc finger protein 41 homolog (198 aa).

Residues 1–12 show a composition bias toward basic residues; it reads MEKPAGRKKKTP. A disordered region spans residues 1–55; it reads MEKPAGRKKKTPTPREEADVQKSALREEKVSGDRKPPERPTVPRKPRTEPCLSPE. The segment covering 13-38 has biased composition (basic and acidic residues); the sequence is TPREEADVQKSALREEKVSGDRKPPE. 4 C2H2-type zinc fingers span residues 87 to 109, 115 to 137, 143 to 165, and 171 to 193; these read YECSECGRIFKHKTDHIRHQRVH, FKCAQCGKAFRHSSDVTKHQRTH, FKCGECGKAFNCGSNLLKHQKTH, and YECTHCGKAFAYSSCLIRHQKRH.

This sequence belongs to the krueppel C2H2-type zinc-finger protein family.

The protein localises to the nucleus. Its function is as follows. A putative DNA-binding regulatory protein associated with meiosis in spermatogenesis. The sequence is that of Zinc finger protein 41 homolog (ZFP41) from Homo sapiens (Human).